The chain runs to 1409 residues: DNA-directed RNA polymerase subunit beta' (1409 aa).

C70, C72, C85, and C88 together coordinate Zn(2+). Residues D461, D463, and D465 each coordinate Mg(2+). 4 residues coordinate Zn(2+): C820, C894, C901, and C904.

Belongs to the RNA polymerase beta' chain family. In terms of assembly, the RNAP catalytic core consists of 2 alpha, 1 beta, 1 beta' and 1 omega subunit. When a sigma factor is associated with the core the holoenzyme is formed, which can initiate transcription. Requires Mg(2+) as cofactor. Zn(2+) is required as a cofactor.

The enzyme catalyses RNA(n) + a ribonucleoside 5'-triphosphate = RNA(n+1) + diphosphate. Its function is as follows. DNA-dependent RNA polymerase catalyzes the transcription of DNA into RNA using the four ribonucleoside triphosphates as substrates. This Ralstonia nicotianae (strain ATCC BAA-1114 / GMI1000) (Ralstonia solanacearum) protein is DNA-directed RNA polymerase subunit beta'.